The following is a 337-amino-acid chain: Biotin synthase 1 (337 aa).

Residues 1–23 (MSSVLTQPLAFHPPRPAVQPREH) form a disordered region. The Radical SAM core domain maps to 57 to 284 (TRVEFATLLS…TARVRLSAGR (228 aa)). Positions 72, 76, and 79 each coordinate [4Fe-4S] cluster. [2Fe-2S] cluster contacts are provided by Cys-116, Cys-147, Cys-207, and Arg-279.

This sequence belongs to the radical SAM superfamily. Biotin synthase family. As to quaternary structure, homodimer. [4Fe-4S] cluster serves as cofactor. Requires [2Fe-2S] cluster as cofactor.

It catalyses the reaction (4R,5S)-dethiobiotin + (sulfur carrier)-SH + 2 reduced [2Fe-2S]-[ferredoxin] + 2 S-adenosyl-L-methionine = (sulfur carrier)-H + biotin + 2 5'-deoxyadenosine + 2 L-methionine + 2 oxidized [2Fe-2S]-[ferredoxin]. It functions in the pathway cofactor biosynthesis; biotin biosynthesis; biotin from 7,8-diaminononanoate: step 2/2. Functionally, catalyzes the conversion of dethiobiotin (DTB) to biotin by the insertion of a sulfur atom into dethiobiotin via a radical-based mechanism. In Polaromonas sp. (strain JS666 / ATCC BAA-500), this protein is Biotin synthase 1.